The sequence spans 428 residues: Elongation factor 1-alpha (428 aa).

In terms of domain architecture, tr-type G spans 5 to 225 (KPILNVAFIG…DAFQPPEKPT (221 aa)). The interval 14 to 21 (GHVDAGKS) is G1. 14 to 21 (GHVDAGKS) provides a ligand contact to GTP. Mg(2+) is bound at residue S21. Positions 70-74 (GVTID) are G2. The G3 stretch occupies residues 91-94 (DCPG). Residues 91 to 95 (DCPGH) and 149 to 152 (NKMD) contribute to the GTP site. Positions 149–152 (NKMD) are G4. The tract at residues 189 to 191 (ASL) is G5.

This sequence belongs to the TRAFAC class translation factor GTPase superfamily. Classic translation factor GTPase family. EF-Tu/EF-1A subfamily.

The protein resides in the cytoplasm. It catalyses the reaction GTP + H2O = GDP + phosphate + H(+). In terms of biological role, GTP hydrolase that promotes the GTP-dependent binding of aminoacyl-tRNA to the A-site of ribosomes during protein biosynthesis. The protein is Elongation factor 1-alpha of Methanococcus maripaludis (strain C5 / ATCC BAA-1333).